The sequence spans 405 residues: uncharacterized protein (405 aa).

Disordered regions lie at residues 1–21, 150–179, and 285–405; these read MSKK…ESKT, IKDE…QEGP, and DDED…KSRS. A compositionally biased stretch (polar residues) spans 7 to 16; the sequence is KNASPKNNSD. Composition is skewed to acidic residues over residues 312–331 and 349–358; these read SDDE…DDEE and DDEDDEEEGE. Composition is skewed to basic residues over residues 365 to 374 and 390 to 405; these read SSKKSSKKAS and PKKK…KSRS.

This is an uncharacterized protein from Acanthamoeba polyphaga (Amoeba).